We begin with the raw amino-acid sequence, 78 residues long: Acyl carrier protein (78 aa).

The Carrier domain occupies 2-77 (SSIEERVKKI…LAINYINENL (76 aa)). At S37 the chain carries O-(pantetheine 4'-phosphoryl)serine.

It belongs to the acyl carrier protein (ACP) family. In terms of processing, 4'-phosphopantetheine is transferred from CoA to a specific serine of apo-ACP by AcpS. This modification is essential for activity because fatty acids are bound in thioester linkage to the sulfhydryl of the prosthetic group.

Its subcellular location is the cytoplasm. The protein operates within lipid metabolism; fatty acid biosynthesis. Its function is as follows. Carrier of the growing fatty acid chain in fatty acid biosynthesis. This is Acyl carrier protein from Saccharophagus degradans (strain 2-40 / ATCC 43961 / DSM 17024).